The following is a 223-amino-acid chain: Octanoyltransferase (223 aa).

One can recognise a BPL/LPL catalytic domain in the interval 30-214 (DLDRDCFLLT…IVADLFGEFT (185 aa)). Substrate contacts are provided by residues 75-82 (RGGEITYH), 144-146 (SIG), and 157-159 (GFA). Cys175 acts as the Acyl-thioester intermediate in catalysis.

Belongs to the LipB family.

The protein localises to the cytoplasm. It catalyses the reaction octanoyl-[ACP] + L-lysyl-[protein] = N(6)-octanoyl-L-lysyl-[protein] + holo-[ACP] + H(+). It participates in protein modification; protein lipoylation via endogenous pathway; protein N(6)-(lipoyl)lysine from octanoyl-[acyl-carrier-protein]: step 1/2. Functionally, catalyzes the transfer of endogenously produced octanoic acid from octanoyl-acyl-carrier-protein onto the lipoyl domains of lipoate-dependent enzymes. Lipoyl-ACP can also act as a substrate although octanoyl-ACP is likely to be the physiological substrate. This is Octanoyltransferase from Desulfotalea psychrophila (strain LSv54 / DSM 12343).